The primary structure comprises 1523 residues: ATP-binding cassette sub-family C member 3 (1523 aa).

Topologically, residues 1-35 are extracellular; that stretch reads MDRLCGSGELGSKFWDSNLSIYTNTPDLTPCFQNS. A glycan (N-linked (GlcNAc...) asparagine) is linked at Asn-18. A helical membrane pass occupies residues 36 to 56; sequence LLAWVPCIYLWAALPCYLFYL. The Cytoplasmic portion of the chain corresponds to 57 to 75; the sequence is RHHQLGYIVLSWLSRLKTA. A helical transmembrane segment spans residues 76-96; the sequence is LGVLLWCVSWVDLFYSFHGLI. The Extracellular segment spans residues 97–102; that stretch reads HGSSPA. The helical transmembrane segment at 103–123 threads the bilayer; that stretch reads PVFFVTPLVVGITMLLATLLI. The Cytoplasmic portion of the chain corresponds to 124-129; that stretch reads QYERLR. Residues 130–150 traverse the membrane as a helical segment; the sequence is GVQSSGVLIIFWLLCVICAII. Residues 151-170 are Extracellular-facing; that stretch reads PFRSKILSALAEGKILDPFR. Residues 171 to 191 traverse the membrane as a helical segment; sequence FTTFYIYFALVFCALILSCFK. The Cytoplasmic portion of the chain corresponds to 192–301; the sequence is EKPPLFSPEN…KSKQPSFLRA (110 aa). Residues 302–324 traverse the membrane as a helical segment; it reads LVRTFTSSLLMSACFNLIQNLLG. The region spanning 310–593 is the ABC transmembrane type-1 1 domain; it reads LLMSACFNLI…LPQLISGLTQ (284 aa). Topologically, residues 325-345 are extracellular; that stretch reads FVNPQLLSILIRFISDPTAPT. The chain crosses the membrane as a helical span at residues 346 to 366; that stretch reads WWGFLLAGLMFLSSTMQTLIL. The Cytoplasmic segment spans residues 367-419; sequence HQYYHCIFVMALRLRTAIIGVIYRKALVITNSVKRESTVGEMVNLMSVDAQRF. The chain crosses the membrane as a helical span at residues 420–440; that stretch reads MDVSPFINLLWSAPLQVILAI. A topological domain (extracellular) is located at residue Tyr-441. The chain crosses the membrane as a helical span at residues 442 to 462; sequence FLWQILGPSALAGVAVIVLLI. The Cytoplasmic segment spans residues 463-535; sequence PLNGAVSMKM…KGAYLQAIST (73 aa). The helical transmembrane segment at 536–556 threads the bilayer; the sequence is FIWICTPFLVTLITLGVYVYV. Topologically, residues 557-567 are extracellular; sequence DESNVLDAEKA. The chain crosses the membrane as a helical span at residues 568–588; that stretch reads FVSLSLFNILKIPLNMLPQLI. The Cytoplasmic portion of the chain corresponds to 589 to 967; it reads SGLTQASVSL…YAKSMGLCTT (379 aa). One can recognise an ABC transporter 1 domain in the interval 626 to 850; sequence ITIHNGTFTW…DGSFANFLRN (225 aa). ATP is bound at residue 660 to 667; it reads GPVGCGKS. Residues Ser-903 and Ser-906 each carry the phosphoserine modification. Residues 903–915 are compositionally biased toward polar residues; it reads SSLSSEGEVQNRT. Residues 903–923 are disordered; it reads SSLSSEGEVQNRTMPKKHTNS. The ABC transmembrane type-1 2 domain maps to 967-1248; the sequence is TLSICLLYGG…MIRMISDLES (282 aa). A helical transmembrane segment spans residues 968 to 988; that stretch reads LSICLLYGGQSAAAIGANVWL. Topologically, residues 989–1013 are extracellular; the sequence is SAWSNDAEEHGQQNKTSVRLGVYAA. A glycan (N-linked (GlcNAc...) asparagine) is linked at Asn-1002. The chain crosses the membrane as a helical span at residues 1014–1034; the sequence is LGILQGLLVMLSAFTMVVGAI. Over 1035–1071 the chain is Cytoplasmic; sequence QAARLLHEALLHNKIRSPQSFFDTTPSGRILNRFSKD. Residues 1072-1092 traverse the membrane as a helical segment; the sequence is IYVIDEVLAPTILMLLNSFFT. Over 1093–1096 the chain is Extracellular; it reads SIST. The helical transmembrane segment at 1097–1117 threads the bilayer; sequence IMVIVASTPLFMVVVLPLAVL. Residues 1118 to 1191 are Cytoplasmic-facing; that stretch reads YGFVQRFYVA…YPYIASNRWL (74 aa). Residues 1192 to 1212 form a helical membrane-spanning segment; it reads GVHVEFVGNCVVLFAALFAVI. The Extracellular segment spans residues 1213 to 1219; it reads GRNSLNP. Residues 1220-1240 form a helical membrane-spanning segment; sequence GLVGLSVSYALQVTMALNWMI. Residues 1241–1523 lie on the Cytoplasmic side of the membrane; the sequence is RMISDLESNI…YGMAKDAGLA (283 aa). The ABC transporter 2 domain maps to 1287 to 1519; the sequence is FRNYSVRYRP…GGIFYGMAKD (233 aa). Residue 1319–1326 participates in ATP binding; the sequence is GRTGAGKS.

Belongs to the ABC transporter superfamily. ABCC family. Conjugate transporter (TC 3.A.1.208) subfamily. As to expression, detected throughout the gastrointestinal tract, liver, lung, pancreas, bladder, gall bladder and at low levels in the adrenal gland.

It localises to the basolateral cell membrane. It is found in the basal cell membrane. It catalyses the reaction an S-substituted glutathione(in) + ATP + H2O = an S-substituted glutathione(out) + ADP + phosphate + H(+). The enzyme catalyses ATP + H2O + xenobioticSide 1 = ADP + phosphate + xenobioticSide 2.. It carries out the reaction 17beta-estradiol 17-O-(beta-D-glucuronate)(in) + ATP + H2O = 17beta-estradiol 17-O-(beta-D-glucuronate)(out) + ADP + phosphate + H(+). The catalysed reaction is dehydroepiandrosterone 3-sulfate(in) + ATP + H2O = dehydroepiandrosterone 3-sulfate(out) + ADP + phosphate + H(+). It catalyses the reaction leukotriene C4(in) + ATP + H2O = leukotriene C4(out) + ADP + phosphate + H(+). The enzyme catalyses taurocholate(in) + ATP + H2O = taurocholate(out) + ADP + phosphate + H(+). It carries out the reaction glycocholate(in) + ATP + H2O = glycocholate(out) + ADP + phosphate + H(+). The catalysed reaction is taurolithocholate 3-sulfate(in) + ATP + H2O = taurolithocholate 3-sulfate(out) + ADP + phosphate + H(+). It catalyses the reaction taurochenodeoxycholate 3-sulfate(in) + ATP + H2O = taurochenodeoxycholate 3-sulfate(out) + ADP + phosphate + H(+). The enzyme catalyses (4Z,15Z)-bilirubin IXalpha C8-beta-D-glucuronoside(in) + ATP + H2O = (4Z,15Z)-bilirubin IXalpha C8-beta-D-glucuronoside(out) + ADP + phosphate + H(+). It carries out the reaction (4Z,15Z)-bilirubin IXalpha C8,C12-beta-D-bisglucuronoside(in) + ATP + H2O = (4Z,15Z)-bilirubin IXalpha C8,C12-beta-D-bisglucuronoside(out) + ADP + phosphate + H(+). In terms of biological role, ATP-dependent transporter of the ATP-binding cassette (ABC) family that binds and hydrolyzes ATP to enable active transport of various substrates including many drugs, toxicants and endogenous compound across cell membranes. Transports glucuronide conjugates such as bilirubin diglucuronide, estradiol-17-beta-o-glucuronide and GSH conjugates such as leukotriene C4 (LTC4). Transports also various bile salts (taurocholate, glycocholate, taurochenodeoxycholate-3-sulfate, taurolithocholate- 3-sulfate). Does not contribute substantially to bile salt physiology but provides an alternative route for the export of bile acids and glucuronides from cholestatic hepatocytes. May contribute to regulate the transport of organic compounds in testes across the blood-testis-barrier. The polypeptide is ATP-binding cassette sub-family C member 3 (Abcc3) (Mus musculus (Mouse)).